The primary structure comprises 500 residues: Aspartyl/glutamyl-tRNA(Asn/Gln) amidotransferase subunit B (500 aa).

The protein belongs to the GatB/GatE family. GatB subfamily. In terms of assembly, heterotrimer of A, B and C subunits.

It carries out the reaction L-glutamyl-tRNA(Gln) + L-glutamine + ATP + H2O = L-glutaminyl-tRNA(Gln) + L-glutamate + ADP + phosphate + H(+). The catalysed reaction is L-aspartyl-tRNA(Asn) + L-glutamine + ATP + H2O = L-asparaginyl-tRNA(Asn) + L-glutamate + ADP + phosphate + 2 H(+). Functionally, allows the formation of correctly charged Asn-tRNA(Asn) or Gln-tRNA(Gln) through the transamidation of misacylated Asp-tRNA(Asn) or Glu-tRNA(Gln) in organisms which lack either or both of asparaginyl-tRNA or glutaminyl-tRNA synthetases. The reaction takes place in the presence of glutamine and ATP through an activated phospho-Asp-tRNA(Asn) or phospho-Glu-tRNA(Gln). This chain is Aspartyl/glutamyl-tRNA(Asn/Gln) amidotransferase subunit B, found in Thermosynechococcus vestitus (strain NIES-2133 / IAM M-273 / BP-1).